A 105-amino-acid chain; its full sequence is Small ribosomal subunit protein uS10 (105 aa).

This sequence belongs to the universal ribosomal protein uS10 family. As to quaternary structure, part of the 30S ribosomal subunit.

Involved in the binding of tRNA to the ribosomes. The protein is Small ribosomal subunit protein uS10 of Rickettsia akari (strain Hartford).